We begin with the raw amino-acid sequence, 419 residues long: MLGIITFIIIFGILVIVHEFGHFYFAKKSGILVREFAIGMGPKIFSHVDQGGTLYTLRMLPLGGYVRMAGWGDDKTEIKTGTPASLTLNEQGFVKRINLSQSKLDPTSLPMHVTGYDLEDQLSITGLVLEETKTYKVAHDATIVEEDGTEIRIAPLDVQYQNASIGGRLITNFAGPMNNFILGIVVFILLVFLQGGMPDFSSNHVRVQENGAAAKAGLRDNDQIVAINGYKVNSWNDLTEAVNLATRDLGPSQTIKVTYKSHQRLKTVAVKPQKHAKTYTIGVKASLKTGFKDKLLGGLELAWSGAFTILNALKGLITGFSLNKLGGPVAMYDMSNQAAQNGLESVLSLMAMLSINLGIFNLIPIPALDGGKILMNIIEAIRRKPIKQETEAYITLAGVAIMVVLMIAVTWNDIMRVFF.

Zn(2+) is bound at residue H18. E19 is a catalytic residue. H22 provides a ligand contact to Zn(2+). A run of 4 helical transmembrane segments spans residues 169–191 (LITN…ILLV), 301–323 (LAWS…FSLN), 343–365 (LESV…LIPI), and 392–411 (AYIT…AVTW). The PDZ domain occupies 175-274 (GPMNNFILGI…LKTVAVKPQK (100 aa)).

Belongs to the peptidase M50B family. It depends on Zn(2+) as a cofactor.

It is found in the cell membrane. The polypeptide is Putative zinc metalloprotease SPs1691 (eep) (Streptococcus pyogenes serotype M3 (strain SSI-1)).